The sequence spans 455 residues: E3 ubiquitin-protein ligase IPI1 (455 aa).

Residues 1-42 (MGAEEEEEPASAVGREGGGGGGGARAAGAGAGGDTADDDDSG) form a disordered region. Positions 15 to 33 (REGGGGGGGARAAGAGAGG) are enriched in gly residues. Residues 51-97 (CSICLDAVVAGGGDRSTARLQCGHEFHLDCIGSAFNAKGVMQCPNCR) form an RING-type; atypical zinc finger. Disordered stretches follow at residues 286 to 311 (LDSD…SRIP) and 426 to 455 (QWIG…IPRM). The span at 433–442 (SPPPPPPPPA) shows a compositional bias: pro residues.

As to quaternary structure, interacts with SPL14/IPA1.

It localises to the nucleus. The enzyme catalyses S-ubiquitinyl-[E2 ubiquitin-conjugating enzyme]-L-cysteine + [acceptor protein]-L-lysine = [E2 ubiquitin-conjugating enzyme]-L-cysteine + N(6)-ubiquitinyl-[acceptor protein]-L-lysine.. It participates in protein modification; protein ubiquitination. Functions as an E3 ligase that promotes polyubiquitination of SPL14/IPA1 for subsequent proteasomal degradation. Regulates plant architecture by modulating SPL14/IPA1 abundance. Promotes the degradation of SPL14/IPA1 in panicles, while it stabilizes SPL14/IPA1 in shoot apices. Ubiquitinates the SPL14/IPA1-mediated complex with 'Lys-48'-linked polyubiquitin in panicles and 'Lys-63'-linked polyubiquitin chains in the shoot apex. This chain is E3 ubiquitin-protein ligase IPI1, found in Oryza sativa subsp. japonica (Rice).